The sequence spans 174 residues: Granulocyte colony-stimulating factor (174 aa).

2 disulfides stabilise this stretch: C36–C42 and C64–C74. Residue T133 is glycosylated (O-linked (GalNAc...) threonine).

Belongs to the IL-6 superfamily. In terms of assembly, monomer. In terms of processing, O-glycosylated.

It localises to the secreted. Functionally, granulocyte/macrophage colony-stimulating factors are cytokines that act in hematopoiesis by controlling the production, differentiation, and function of 2 related white cell populations of the blood, the granulocytes and the monocytes-macrophages. This CSF induces granulocytes. The protein is Granulocyte colony-stimulating factor (CSF3) of Ovis aries (Sheep).